Consider the following 341-residue polypeptide: Probable electron transfer flavoprotein subunit alpha, mitochondrial (341 aa).

Leu-285–Asp-313 provides a ligand contact to FAD.

This sequence belongs to the ETF alpha-subunit/FixB family. As to quaternary structure, heterodimer of an alpha and a beta subunit. The cofactor is FAD.

Its subcellular location is the mitochondrion matrix. Functionally, the electron transfer flavoprotein serves as a specific electron acceptor for several dehydrogenases, including five acyl-CoA dehydrogenases, glutaryl-CoA and sarcosine dehydrogenase. It transfers the electrons to the main mitochondrial respiratory chain via ETF-ubiquinone oxidoreductase (ETF dehydrogenase). The protein is Probable electron transfer flavoprotein subunit alpha, mitochondrial of Schizosaccharomyces pombe (strain 972 / ATCC 24843) (Fission yeast).